We begin with the raw amino-acid sequence, 253 residues long: Probable transcriptional regulatory protein RC0681 (253 aa).

The disordered stretch occupies residues 1–21; that stretch reads MAGHSKFKNIQHRKGAQDKKR.

It belongs to the TACO1 family.

The protein resides in the cytoplasm. This chain is Probable transcriptional regulatory protein RC0681, found in Rickettsia conorii (strain ATCC VR-613 / Malish 7).